A 413-amino-acid polypeptide reads, in one-letter code: Elongation factor 1-alpha (413 aa).

The region spanning 5 to 211 (KTHMNLAFIG…DALDEPDKPV (207 aa)) is the tr-type G domain. The interval 14–21 (GHVDHGKS) is G1. A GTP-binding site is contributed by 14–21 (GHVDHGKS). Residue Ser-21 participates in Mg(2+) binding. Residues 60–64 (GVTID) form a G2 region. The interval 81 to 84 (DCPG) is G3. Residues 81 to 85 (DCPGH) and 136 to 139 (NKMD) each bind GTP. Residues 136 to 139 (NKMD) are G4. Positions 175–177 (SAF) are G5.

Belongs to the TRAFAC class translation factor GTPase superfamily. Classic translation factor GTPase family. EF-Tu/EF-1A subfamily.

It is found in the cytoplasm. The catalysed reaction is GTP + H2O = GDP + phosphate + H(+). In terms of biological role, GTP hydrolase that promotes the GTP-dependent binding of aminoacyl-tRNA to the A-site of ribosomes during protein biosynthesis. This is Elongation factor 1-alpha from Methanosphaera stadtmanae (strain ATCC 43021 / DSM 3091 / JCM 11832 / MCB-3).